A 353-amino-acid polypeptide reads, in one-letter code: O-antigen chain mannosyltransferase RfbU (353 aa).

The protein belongs to the glycosyltransferase group 1 family. Glycosyltransferase 4 subfamily.

The catalysed reaction is alpha-L-rhamnosyl-(1-&gt;3)-alpha-D-galactosyl-1-diphospho-di-trans,octa-cis-undecaprenol + GDP-alpha-D-mannose = alpha-D-Man-(1-&gt;4)-alpha-L-Rha-(1-&gt;3)-alpha-D-Gal-di-trans,octa-cis-undecaprenyl diphosphate + GDP + H(+). Its pathway is bacterial outer membrane biogenesis; LPS O-antigen biosynthesis. In terms of biological role, mannosyltransferase involved in the biosynthesis of the repeat unit of the lipopolysaccharide (LPS) O-antigen region. Catalyzes the addition of a mannose to the rhamnosyl-galactosyl-undecaprenyl diphosphate intermediate. This Salmonella typhimurium (strain LT2 / SGSC1412 / ATCC 700720) protein is O-antigen chain mannosyltransferase RfbU.